Reading from the N-terminus, the 317-residue chain is 4-hydroxy-3-methylbut-2-enyl diphosphate reductase (317 aa).

A [4Fe-4S] cluster-binding site is contributed by C12. Residues H41 and H74 each contribute to the (2E)-4-hydroxy-3-methylbut-2-enyl diphosphate site. H41 and H74 together coordinate dimethylallyl diphosphate. Isopentenyl diphosphate-binding residues include H41 and H74. Residue C97 participates in [4Fe-4S] cluster binding. H125 provides a ligand contact to (2E)-4-hydroxy-3-methylbut-2-enyl diphosphate. H125 is a dimethylallyl diphosphate binding site. H125 contributes to the isopentenyl diphosphate binding site. Residue E127 is the Proton donor of the active site. (2E)-4-hydroxy-3-methylbut-2-enyl diphosphate is bound at residue T168. C198 lines the [4Fe-4S] cluster pocket. Positions 226, 227, 228, and 270 each coordinate (2E)-4-hydroxy-3-methylbut-2-enyl diphosphate. The dimethylallyl diphosphate site is built by S226, S227, N228, and S270. S226, S227, N228, and S270 together coordinate isopentenyl diphosphate.

Belongs to the IspH family. In terms of assembly, homodimer. [4Fe-4S] cluster serves as cofactor.

It catalyses the reaction isopentenyl diphosphate + 2 oxidized [2Fe-2S]-[ferredoxin] + H2O = (2E)-4-hydroxy-3-methylbut-2-enyl diphosphate + 2 reduced [2Fe-2S]-[ferredoxin] + 2 H(+). The enzyme catalyses dimethylallyl diphosphate + 2 oxidized [2Fe-2S]-[ferredoxin] + H2O = (2E)-4-hydroxy-3-methylbut-2-enyl diphosphate + 2 reduced [2Fe-2S]-[ferredoxin] + 2 H(+). Its pathway is isoprenoid biosynthesis; dimethylallyl diphosphate biosynthesis; dimethylallyl diphosphate from (2E)-4-hydroxy-3-methylbutenyl diphosphate: step 1/1. The protein operates within isoprenoid biosynthesis; isopentenyl diphosphate biosynthesis via DXP pathway; isopentenyl diphosphate from 1-deoxy-D-xylulose 5-phosphate: step 6/6. Functionally, catalyzes the conversion of 1-hydroxy-2-methyl-2-(E)-butenyl 4-diphosphate (HMBPP) into a mixture of isopentenyl diphosphate (IPP) and dimethylallyl diphosphate (DMAPP). Acts in the terminal step of the DOXP/MEP pathway for isoprenoid precursor biosynthesis. The polypeptide is 4-hydroxy-3-methylbut-2-enyl diphosphate reductase (Proteus mirabilis (strain HI4320)).